The primary structure comprises 689 residues: DNA ligase (689 aa).

Residues 40–44 (DAEYD), 89–90 (SL), and Glu121 each bind NAD(+). Lys123 serves as the catalytic N6-AMP-lysine intermediate. NAD(+)-binding residues include Arg144, Glu179, Lys295, and Lys319. 4 residues coordinate Zn(2+): Cys413, Cys416, Cys431, and Cys437. Residues 610-689 (REQSSLTGKI…AEWLTLVRDI (80 aa)) enclose the BRCT domain.

This sequence belongs to the NAD-dependent DNA ligase family. LigA subfamily. Requires Mg(2+) as cofactor. It depends on Mn(2+) as a cofactor.

It carries out the reaction NAD(+) + (deoxyribonucleotide)n-3'-hydroxyl + 5'-phospho-(deoxyribonucleotide)m = (deoxyribonucleotide)n+m + AMP + beta-nicotinamide D-nucleotide.. In terms of biological role, DNA ligase that catalyzes the formation of phosphodiester linkages between 5'-phosphoryl and 3'-hydroxyl groups in double-stranded DNA using NAD as a coenzyme and as the energy source for the reaction. It is essential for DNA replication and repair of damaged DNA. The protein is DNA ligase of Rickettsia bellii (strain OSU 85-389).